The following is a 408-amino-acid chain: Argininosuccinate synthase (408 aa).

ATP contacts are provided by residues 9-17 (AYSGGLDTS) and A36. L-citrulline contacts are provided by Y87 and S92. G117 is an ATP binding site. The L-aspartate site is built by T119, N123, and D124. N123 provides a ligand contact to L-citrulline. Residues R127, S176, S185, E261, and Y273 each coordinate L-citrulline.

Belongs to the argininosuccinate synthase family. Type 1 subfamily. Homotetramer.

It localises to the cytoplasm. The catalysed reaction is L-citrulline + L-aspartate + ATP = 2-(N(omega)-L-arginino)succinate + AMP + diphosphate + H(+). The protein operates within amino-acid biosynthesis; L-arginine biosynthesis; L-arginine from L-ornithine and carbamoyl phosphate: step 2/3. This chain is Argininosuccinate synthase, found in Deinococcus deserti (strain DSM 17065 / CIP 109153 / LMG 22923 / VCD115).